The primary structure comprises 372 residues: 4-hydroxy-3-methylbut-2-en-1-yl diphosphate synthase (flavodoxin) (372 aa).

4 residues coordinate [4Fe-4S] cluster: Cys-270, Cys-273, Cys-305, and Glu-312.

The protein belongs to the IspG family. It depends on [4Fe-4S] cluster as a cofactor.

The catalysed reaction is (2E)-4-hydroxy-3-methylbut-2-enyl diphosphate + oxidized [flavodoxin] + H2O + 2 H(+) = 2-C-methyl-D-erythritol 2,4-cyclic diphosphate + reduced [flavodoxin]. The protein operates within isoprenoid biosynthesis; isopentenyl diphosphate biosynthesis via DXP pathway; isopentenyl diphosphate from 1-deoxy-D-xylulose 5-phosphate: step 5/6. Functionally, converts 2C-methyl-D-erythritol 2,4-cyclodiphosphate (ME-2,4cPP) into 1-hydroxy-2-methyl-2-(E)-butenyl 4-diphosphate. The sequence is that of 4-hydroxy-3-methylbut-2-en-1-yl diphosphate synthase (flavodoxin) from Escherichia coli O8 (strain IAI1).